We begin with the raw amino-acid sequence, 271 residues long: Mannosyl-3-phosphoglycerate phosphatase (271 aa).

Asp13 functions as the Nucleophile in the catalytic mechanism. Mg(2+) is bound by residues Asp13, Asp15, and Asp214.

Belongs to the HAD-like hydrolase superfamily. MPGP family. It depends on Mg(2+) as a cofactor.

It localises to the cytoplasm. The catalysed reaction is 2-O-(alpha-D-mannosyl)-3-phosphoglycerate + H2O = (2R)-2-O-(alpha-D-mannosyl)-glycerate + phosphate. This is Mannosyl-3-phosphoglycerate phosphatase (yedP) from Escherichia coli O6:K15:H31 (strain 536 / UPEC).